The following is a 358-amino-acid chain: Neuronal-specific septin-3 (358 aa).

Positions 1-10 (MSKGLPETRT) are enriched in basic and acidic residues. Residues 1 to 30 (MSKGLPETRTDAAMSELVPEPRPKPAVPMK) form a disordered region. A Septin-type G domain is found at 58-331 (TGFDFNIMVV…ETYRAKRLND (274 aa)). Positions 68 to 75 (GQSGLGKS) are G1 motif. Position 68–75 (68–75 (GQSGLGKS)) interacts with GTP. Ser91 is modified (phosphoserine). Residue Thr102 participates in GTP binding. Residues 125-128 (DTPG) are G3 motif. Residues 207-210 (AKAD) are G4 motif. Residues 208–216 (KADTMTLEE), Gly265, and Arg280 contribute to the GTP site.

It belongs to the TRAFAC class TrmE-Era-EngA-EngB-Septin-like GTPase superfamily. Septin GTPase family. As to quaternary structure, septins polymerize into heterooligomeric protein complexes that form filaments, and can associate with cellular membranes, actin filaments and microtubules. GTPase activity is required for filament formation. Post-translationally, phosphorylated by PKG on serine residues. Phosphorylated by PKG on Ser-91. In terms of tissue distribution, brain-specific.

It localises to the cytoplasm. Its subcellular location is the cytoskeleton. The protein resides in the synapse. Functionally, filament-forming cytoskeletal GTPase. May play a role in cytokinesis (Potential). This is Neuronal-specific septin-3 from Homo sapiens (Human).